A 171-amino-acid polypeptide reads, in one-letter code: Lipoprotein signal peptidase (171 aa).

3 consecutive transmembrane segments (helical) span residues 8 to 28 (SFLW…YIVV), 64 to 84 (WQQY…VYFL), and 99 to 119 (ALII…GFVV). Residues D120 and D138 contribute to the active site. A helical transmembrane segment spans residues 133 to 153 (VFNIADIAICIGAGLLALDAF).

The protein belongs to the peptidase A8 family.

It is found in the cell inner membrane. It catalyses the reaction Release of signal peptides from bacterial membrane prolipoproteins. Hydrolyzes -Xaa-Yaa-Zaa-|-(S,diacylglyceryl)Cys-, in which Xaa is hydrophobic (preferably Leu), and Yaa (Ala or Ser) and Zaa (Gly or Ala) have small, neutral side chains.. Its pathway is protein modification; lipoprotein biosynthesis (signal peptide cleavage). Functionally, this protein specifically catalyzes the removal of signal peptides from prolipoproteins. The chain is Lipoprotein signal peptidase from Haemophilus influenzae (strain PittGG).